The chain runs to 467 residues: Dihydroorotase (467 aa).

The Zn(2+) site is built by histidine 60 and histidine 62. Substrate contacts are provided by residues 62-64 and asparagine 94; that span reads HFR. Zn(2+)-binding residues include glutamate 146, histidine 180, histidine 234, and aspartate 313. The active site involves aspartate 313. Histidine 317 contributes to the substrate binding site. The disordered stretch occupies residues 439–467; the sequence is KPGRGEFLEGSGKRSEEDEEENSEETGSD. The segment covering 441–454 has biased composition (basic and acidic residues); that stretch reads GRGEFLEGSGKRSE. Residues 455–467 are compositionally biased toward acidic residues; the sequence is EDEEENSEETGSD.

Belongs to the metallo-dependent hydrolases superfamily. DHOase family. Class I DHOase subfamily. It depends on Zn(2+) as a cofactor.

The catalysed reaction is (S)-dihydroorotate + H2O = N-carbamoyl-L-aspartate + H(+). Its pathway is pyrimidine metabolism; UMP biosynthesis via de novo pathway; (S)-dihydroorotate from bicarbonate: step 3/3. Its function is as follows. Catalyzes the reversible cyclization of carbamoyl aspartate to dihydroorotate. The protein is Dihydroorotase of Methanosarcina acetivorans (strain ATCC 35395 / DSM 2834 / JCM 12185 / C2A).